Reading from the N-terminus, the 371-residue chain is Assembly protein G7 (371 aa).

This sequence belongs to the chordopoxvirinae G7 family. In terms of assembly, part of a complex composed of A30, G7, F10 kinase, A15, D2, D3, and J1. Post-translationally, phosphorylated on serines by F10 kinase, phosphorylation state is regulated by H1 phosphatase. In terms of processing, undergoes proteolytic processing during morphogenesis, probably required for the transformation of immature virions (IV) into mature virions (MV).

It is found in the host cytoplasm. The protein resides in the virion. In terms of biological role, late protein which is a part of a large complex required for early virion morphogenesis. This complex participates in the formation of virosomes and the incorporation of virosomal contents into nascent immature virions. The protein is Assembly protein G7 of Variola virus (isolate Human/India/Ind3/1967) (VARV).